Reading from the N-terminus, the 343-residue chain is D-alanine--D-alanine ligase (343 aa).

Residues 129–335 (KYVLEHFNIK…YSKLIDELIE (207 aa)) form the ATP-grasp domain. 162-217 (ENKLGYAVFIKPSNSGSSVGITKAHNRKELEAGLEEAMKYDRKILVEEALNAREIE) serves as a coordination point for ATP. 3 residues coordinate Mg(2+): Asp-288, Glu-302, and Asn-304.

It belongs to the D-alanine--D-alanine ligase family. The cofactor is Mg(2+). Mn(2+) is required as a cofactor.

It localises to the cytoplasm. It catalyses the reaction 2 D-alanine + ATP = D-alanyl-D-alanine + ADP + phosphate + H(+). It functions in the pathway cell wall biogenesis; peptidoglycan biosynthesis. Cell wall formation. This is D-alanine--D-alanine ligase from Clostridium acetobutylicum (strain ATCC 824 / DSM 792 / JCM 1419 / IAM 19013 / LMG 5710 / NBRC 13948 / NRRL B-527 / VKM B-1787 / 2291 / W).